Consider the following 140-residue polypeptide: Con-Ins Im2 (140 aa).

Residues 1-29 form the signal peptide; it reads MALTWPSSPPVLLTLLLSLLALQLCAVYG. 4 cysteine pairs are disulfide-bonded: Cys-35-Cys-123, Cys-50-Cys-126, Cys-62-Cys-139, and Cys-125-Cys-130. The propeptide at 64–110 is c peptide; sequence PRGYVSNWFTKRSAPNKPAETFVDQNLRGVLLNKREALSYLRPREPR. Glu-134 bears the 4-carboxyglutamate; partial mark.

The protein belongs to the insulin family. As to quaternary structure, heterodimer of A and B chains; disulfide-linked. In terms of tissue distribution, expressed by the venom gland.

Its subcellular location is the secreted. In terms of biological role, this venom insulin facilitates prey capture by rapidly inducing hypoglycemic shock. Intraperitoneal injection of this peptide into zebrafish lowers blood glucose with the same potency than human insulin. In vivo, when applied to water, this peptide reduces overall locomotor activity of zebrafish larvae, observed as a significant decrease in the percentage of time spent swimming and movement frequency. The protein is Con-Ins Im2 of Conus imperialis (Imperial cone).